The sequence spans 225 residues: UPF0758 protein Shewmr7_0359 (225 aa).

The 123-residue stretch at 102–224 (VLTNPDLTRD…IVSFAERGWI (123 aa)) folds into the MPN domain. Zn(2+) contacts are provided by histidine 173, histidine 175, and aspartate 186. The short motif at 173-186 (HNHPSGIAEPSQAD) is the JAMM motif element.

This sequence belongs to the UPF0758 family.

In Shewanella sp. (strain MR-7), this protein is UPF0758 protein Shewmr7_0359.